Reading from the N-terminus, the 206-residue chain is Small ribosomal subunit protein uS4 (206 aa).

The 61-residue stretch at 96–156 (QRLDNVVYRM…EKSKTQARII (61 aa)) folds into the S4 RNA-binding domain.

Belongs to the universal ribosomal protein uS4 family. In terms of assembly, part of the 30S ribosomal subunit. Contacts protein S5. The interaction surface between S4 and S5 is involved in control of translational fidelity.

One of the primary rRNA binding proteins, it binds directly to 16S rRNA where it nucleates assembly of the body of the 30S subunit. Functionally, with S5 and S12 plays an important role in translational accuracy. The protein is Small ribosomal subunit protein uS4 of Pseudoalteromonas translucida (strain TAC 125).